A 111-amino-acid chain; its full sequence is Nucleoid-associated protein Ppha_1174 (111 aa).

This sequence belongs to the YbaB/EbfC family. Homodimer.

The protein localises to the cytoplasm. The protein resides in the nucleoid. In terms of biological role, binds to DNA and alters its conformation. May be involved in regulation of gene expression, nucleoid organization and DNA protection. This is Nucleoid-associated protein Ppha_1174 from Pelodictyon phaeoclathratiforme (strain DSM 5477 / BU-1).